The following is a 300-amino-acid chain: Ribonuclease HIII (300 aa).

Positions 86-300 (RPRLGVDESG…FNEICDSASA (215 aa)) constitute an RNase H type-2 domain. Asp92, Glu93, and Asp196 together coordinate a divalent metal cation.

Belongs to the RNase HII family. RnhC subfamily. The cofactor is Mn(2+). Mg(2+) is required as a cofactor.

It localises to the cytoplasm. The enzyme catalyses Endonucleolytic cleavage to 5'-phosphomonoester.. Functionally, endonuclease that specifically degrades the RNA of RNA-DNA hybrids. The chain is Ribonuclease HIII from Chlamydia caviae (strain ATCC VR-813 / DSM 19441 / 03DC25 / GPIC) (Chlamydophila caviae).